We begin with the raw amino-acid sequence, 183 residues long: Adenine phosphoribosyltransferase (183 aa).

The protein belongs to the purine/pyrimidine phosphoribosyltransferase family. Homodimer.

The protein resides in the cytoplasm. It catalyses the reaction AMP + diphosphate = 5-phospho-alpha-D-ribose 1-diphosphate + adenine. Its pathway is purine metabolism; AMP biosynthesis via salvage pathway; AMP from adenine: step 1/1. Functionally, catalyzes a salvage reaction resulting in the formation of AMP, that is energically less costly than de novo synthesis. The sequence is that of Adenine phosphoribosyltransferase from Citrobacter koseri (strain ATCC BAA-895 / CDC 4225-83 / SGSC4696).